The sequence spans 138 residues: Putative pre-16S rRNA nuclease (138 aa).

This sequence belongs to the YqgF nuclease family.

Its subcellular location is the cytoplasm. Could be a nuclease involved in processing of the 5'-end of pre-16S rRNA. This Geobacillus sp. (strain WCH70) protein is Putative pre-16S rRNA nuclease.